The chain runs to 253 residues: Triosephosphate isomerase (253 aa).

9 to 11 (NWK) lines the substrate pocket. His-95 functions as the Electrophile in the catalytic mechanism. Residue Glu-167 is the Proton acceptor of the active site. Substrate is bound by residues Gly-173, Ser-213, and 234–235 (GG). Ser-213 carries the phosphoserine modification.

It belongs to the triosephosphate isomerase family. As to quaternary structure, homodimer.

It localises to the cytoplasm. The catalysed reaction is D-glyceraldehyde 3-phosphate = dihydroxyacetone phosphate. The protein operates within carbohydrate biosynthesis; gluconeogenesis. It participates in carbohydrate degradation; glycolysis; D-glyceraldehyde 3-phosphate from glycerone phosphate: step 1/1. Involved in the gluconeogenesis. Catalyzes stereospecifically the conversion of dihydroxyacetone phosphate (DHAP) to D-glyceraldehyde-3-phosphate (G3P). The polypeptide is Triosephosphate isomerase (Bacillus subtilis (strain 168)).